The sequence spans 145 residues: 3-hydroxyacyl-[acyl-carrier-protein] dehydratase FabZ (145 aa).

The active site involves His-47.

Belongs to the thioester dehydratase family. FabZ subfamily.

The protein localises to the cytoplasm. The enzyme catalyses a (3R)-hydroxyacyl-[ACP] = a (2E)-enoyl-[ACP] + H2O. Involved in unsaturated fatty acids biosynthesis. Catalyzes the dehydration of short chain beta-hydroxyacyl-ACPs and long chain saturated and unsaturated beta-hydroxyacyl-ACPs. This is 3-hydroxyacyl-[acyl-carrier-protein] dehydratase FabZ from Aromatoleum aromaticum (strain DSM 19018 / LMG 30748 / EbN1) (Azoarcus sp. (strain EbN1)).